A 217-amino-acid polypeptide reads, in one-letter code: UPF0502 protein Sfri_1696 (217 aa).

Belongs to the UPF0502 family.

In Shewanella frigidimarina (strain NCIMB 400), this protein is UPF0502 protein Sfri_1696.